The primary structure comprises 529 residues: ATP synthase F(1) complex subunit beta, mitochondrial (529 aa).

The transit peptide at 1–47 (MLGFVGRVAAAPASGALRRLTPSASLPPAQLLLRAAPTAVHPVRDYA) directs the protein to the mitochondrion. Ser106 carries an O-linked (GlcNAc) serine glycan. An N6-acetyllysine; alternate mark is found at Lys124, Lys133, and Lys161. An N6-succinyllysine; alternate mark is found at Lys124, Lys133, and Lys161. The residue at position 198 (Lys198) is an N6-acetyllysine. The ADP site is built by Gly209, Val210, Gly211, Lys212, Thr213, and Val214. Residue Gly209 coordinates ATP. Positions 209, 210, 211, 212, and 213 each coordinate phosphate. Residues Gly211, Lys212, Thr213, and Val214 each coordinate ATP. Thr213 contacts Mg(2+). Position 238 (Glu238) interacts with Mg(2+). Arg239 provides a ligand contact to ATP. N6-acetyllysine; alternate occurs at positions 259 and 264. Lys259 and Lys264 each carry N6-succinyllysine; alternate. Thr312 is modified (phosphothreonine). The residue at position 415 (Ser415) is a Phosphoserine. N6-acetyllysine is present on Lys426. Phosphoserine is present on Ser433. Lys480 and Lys485 each carry N6-acetyllysine. Lys522 is subject to N6-acetyllysine; alternate. At Lys522 the chain carries N6-succinyllysine; alternate. Ser529 bears the Phosphoserine mark.

The protein belongs to the ATPase alpha/beta chains family. Homotrimer. Component of the ATP synthase complex composed at least of ATP5F1A/subunit alpha, ATP5F1B/subunit beta, ATP5MC1/subunit c (homooctomer), MT-ATP6/subunit a, MT-ATP8/subunit 8, ATP5ME/subunit e, ATP5MF/subunit f, ATP5MG/subunit g, ATP5MK/subunit k, ATP5MJ/subunit j, ATP5F1C/subunit gamma, ATP5F1D/subunit delta, ATP5F1E/subunit epsilon, ATP5PF/subunit F6, ATP5PB/subunit b, ATP5PD/subunit d, ATP5PO/subunit OSCP. ATP synthase complex consists of a soluble F(1) head domain (subunits alpha(3) and beta(3)) - the catalytic core - and a membrane F(0) domain - the membrane proton channel (subunits c, a, 8, e, f, g, k and j). These two domains are linked by a central stalk (subunits gamma, delta, and epsilon) rotating inside the F1 region and a stationary peripheral stalk (subunits F6, b, d, and OSCP). Interacts with PPIF. Interacts with BCL2L1 isoform BCL-X(L); the interaction mediates the association of BCL2L1 isoform BCL-X(L) with the mitochondrial membrane F(1)F(0) ATP synthase and enhances neurons metabolic efficiency. Interacts with CLN5 and PPT1. Interacts with S100A1; this interaction increases F1-ATPase activity. Interacts with MTLN. Interacts with TTC5/STRAP; the interaction results in decreased mitochondrial ATP production. It depends on Mg(2+) as a cofactor.

The protein localises to the mitochondrion inner membrane. The enzyme catalyses ATP + H2O + 4 H(+)(in) = ADP + phosphate + 5 H(+)(out). Functionally, catalytic subunit beta, of the mitochondrial membrane ATP synthase complex (F(1)F(0) ATP synthase or Complex V) that produces ATP from ADP in the presence of a proton gradient across the membrane which is generated by electron transport complexes of the respiratory chain. ATP synthase complex consist of a soluble F(1) head domain - the catalytic core - and a membrane F(1) domain - the membrane proton channel. These two domains are linked by a central stalk rotating inside the F(1) region and a stationary peripheral stalk. During catalysis, ATP synthesis in the catalytic domain of F(1) is coupled via a rotary mechanism of the central stalk subunits to proton translocation. In vivo, can only synthesize ATP although its ATP hydrolase activity can be activated artificially in vitro. With the subunit alpha (ATP5F1A), forms the catalytic core in the F(1) domain. The sequence is that of ATP synthase F(1) complex subunit beta, mitochondrial from Homo sapiens (Human).